Here is a 346-residue protein sequence, read N- to C-terminus: Small ribosomal subunit biogenesis GTPase RsgA 2 (346 aa).

A CP-type G domain is found at 93-248 (EEQLIAANFD…VIDTPGMREF (156 aa)). GTP is bound by residues 138–141 (TKAD) and 190–198 (GSSGVGKSS). Zn(2+) is bound by residues Cys271, Cys276, His278, and Cys284.

Belongs to the TRAFAC class YlqF/YawG GTPase family. RsgA subfamily. Monomer. Associates with 30S ribosomal subunit, binds 16S rRNA. Zn(2+) is required as a cofactor.

Its subcellular location is the cytoplasm. Functionally, one of several proteins that assist in the late maturation steps of the functional core of the 30S ribosomal subunit. Helps release RbfA from mature subunits. May play a role in the assembly of ribosomal proteins into the subunit. Circularly permuted GTPase that catalyzes slow GTP hydrolysis, GTPase activity is stimulated by the 30S ribosomal subunit. This Listeria monocytogenes serotype 4b (strain F2365) protein is Small ribosomal subunit biogenesis GTPase RsgA 2.